Reading from the N-terminus, the 572-residue chain is Proline--tRNA ligase (572 aa).

The protein belongs to the class-II aminoacyl-tRNA synthetase family. ProS type 1 subfamily. As to quaternary structure, homodimer. May form a tertiary complex with YbaK and t-RNA(Pro).

Its subcellular location is the cytoplasm. The enzyme catalyses tRNA(Pro) + L-proline + ATP = L-prolyl-tRNA(Pro) + AMP + diphosphate. In terms of biological role, catalyzes the attachment of proline to tRNA(Pro) in a two-step reaction: proline is first activated by ATP to form Pro-AMP and then transferred to the acceptor end of tRNA(Pro). As ProRS can inadvertently accommodate and process non-cognate amino acids such as alanine and cysteine, to avoid such errors it has two additional distinct editing activities against alanine. One activity is designated as 'pretransfer' editing and involves the tRNA(Pro)-independent hydrolysis of activated Ala-AMP. The other activity is designated 'posttransfer' editing and involves deacylation of mischarged Ala-tRNA(Pro). The misacylated Cys-tRNA(Pro) is not edited by ProRS, but is probably edited in trans by YbaK. This chain is Proline--tRNA ligase, found in Haemophilus influenzae (strain ATCC 51907 / DSM 11121 / KW20 / Rd).